The following is a 399-amino-acid chain: Phosphoglycerate kinase (399 aa).

Substrate contacts are provided by residues 24-26, arginine 41, 64-67, arginine 123, and arginine 160; these read DLN and HLGR. ATP is bound by residues lysine 210, glycine 298, glutamate 329, and 355 to 358; that span reads GGDS.

It belongs to the phosphoglycerate kinase family. As to quaternary structure, monomer.

The protein resides in the cytoplasm. The enzyme catalyses (2R)-3-phosphoglycerate + ATP = (2R)-3-phospho-glyceroyl phosphate + ADP. The protein operates within carbohydrate degradation; glycolysis; pyruvate from D-glyceraldehyde 3-phosphate: step 2/5. The chain is Phosphoglycerate kinase from Salinispora arenicola (strain CNS-205).